The sequence spans 420 residues: Mannose-1-phosphate guanylyltransferase regulatory subunit alpha (420 aa).

The substrate-binding domain stretch occupies residues L2 to A251. Residues E85 and Q247 each contribute to the GDP-alpha-D-mannose site. Residues L273–L420 form a hexapeptide repeat domain region. A C-loop region spans residues T356–I384.

The protein belongs to the transferase hexapeptide repeat family. In terms of assembly, component of the GMPPA-GMPPB mannose-1-phosphate guanylyltransferase complex composed of 4 GMPPA subunits and 8 GMPPB subunits; the complex is organized into three layers, a central layer made up of 2 GMPPA dimers sandwiched between two layers each made up of 2 GMPPB dimers. Expressed in the liver (at protein level).

It localises to the cytoplasm. In terms of biological role, regulatory subunit of the GMPPA-GMPPB mannose-1-phosphate guanylyltransferase complex; reduces the catalytic activity of GMPPB when part of the complex. Mediates allosteric feedback inhibition of GMPPB catalytic activity upon binding GDP-alpha-D-mannose. Together with GMPPB regulates GDP-alpha-D-mannose levels. The polypeptide is Mannose-1-phosphate guanylyltransferase regulatory subunit alpha (GMPPA) (Sus scrofa (Pig)).